The following is a 128-amino-acid chain: Ribosome-binding factor A (128 aa).

The protein belongs to the RbfA family. Monomer. Binds 30S ribosomal subunits, but not 50S ribosomal subunits or 70S ribosomes.

It localises to the cytoplasm. In terms of biological role, one of several proteins that assist in the late maturation steps of the functional core of the 30S ribosomal subunit. Associates with free 30S ribosomal subunits (but not with 30S subunits that are part of 70S ribosomes or polysomes). Required for efficient processing of 16S rRNA. May interact with the 5'-terminal helix region of 16S rRNA. The sequence is that of Ribosome-binding factor A from Acidithiobacillus ferrooxidans (strain ATCC 23270 / DSM 14882 / CIP 104768 / NCIMB 8455) (Ferrobacillus ferrooxidans (strain ATCC 23270)).